A 228-amino-acid chain; its full sequence is NAD(P)H-hydrate epimerase (228 aa).

In terms of domain architecture, YjeF N-terminal spans Val9 to Ala209. (6S)-NADPHX is bound at residue Asn53–Asp57. K(+) is bound by residues Asn54 and Asp115. (6S)-NADPHX is bound by residues Gly119–Pro125 and Asp148. Ser151 is a K(+) binding site.

The protein belongs to the NnrE/AIBP family. Requires K(+) as cofactor.

It carries out the reaction (6R)-NADHX = (6S)-NADHX. The enzyme catalyses (6R)-NADPHX = (6S)-NADPHX. Its function is as follows. Catalyzes the epimerization of the S- and R-forms of NAD(P)HX, a damaged form of NAD(P)H that is a result of enzymatic or heat-dependent hydration. This is a prerequisite for the S-specific NAD(P)H-hydrate dehydratase to allow the repair of both epimers of NAD(P)HX. This is NAD(P)H-hydrate epimerase from Bordetella pertussis (strain CS).